A 156-amino-acid polypeptide reads, in one-letter code: S-ribosylhomocysteine lyase (156 aa).

Residues His56, His60, and Cys123 each contribute to the Fe cation site.

It belongs to the LuxS family. In terms of assembly, homodimer. It depends on Fe cation as a cofactor.

It carries out the reaction S-(5-deoxy-D-ribos-5-yl)-L-homocysteine = (S)-4,5-dihydroxypentane-2,3-dione + L-homocysteine. Its function is as follows. Involved in the synthesis of autoinducer 2 (AI-2) which is secreted by bacteria and is used to communicate both the cell density and the metabolic potential of the environment. The regulation of gene expression in response to changes in cell density is called quorum sensing. Catalyzes the transformation of S-ribosylhomocysteine (RHC) to homocysteine (HC) and 4,5-dihydroxy-2,3-pentadione (DPD). The protein is S-ribosylhomocysteine lyase of Staphylococcus aureus (strain Mu3 / ATCC 700698).